Consider the following 352-residue polypeptide: MIREDEVRKLVGEMREPFLQRPLGELDAVKEIKIKPEKRHISVKVALAKTGTAEQMQIQQEIVNVLKGAGAETVGLRFEELPEETVAKFRAPSAEKKTLLNMDNPPVFLAVASGKGGVGKSTVSVNLAISLARLGKKVGLIDADIYGFSVPDMMGITVRPTIEGEKLLPVERFGVKVMSMGFFVEENAPVVWRGPMLGKMLNNFFHEVEWGEVDYIVLDLPPGTGDVALDVHTMLPSCKEIIVSTPHPTAAFVAARAGSMAIKTDHEVVGVIENMAYYESAKTGEREYVFGKGGGDKLAEELNVPLLGRIPLKQPDWDKDQFAPSVYDENHPIGEIYQDIAKKIDAKMSVQV.

An ATP-binding site is contributed by G114–S121.

This sequence belongs to the Mrp/NBP35 ATP-binding proteins family. Homodimer. Interacts with BrxC.

In terms of biological role, binds and transfers iron-sulfur (Fe-S) clusters to target apoproteins. Can hydrolyze ATP. Functionally, negatively regulates the expression of hpr/scoC. The effect on hpr/scoC may be indirect. This Bacillus subtilis (strain 168) protein is Iron-sulfur cluster carrier protein (salA).